A 348-amino-acid polypeptide reads, in one-letter code: Mamu class I histocompatibility antigen, alpha chain F (348 aa).

The first 21 residues, 1–21, serve as a signal peptide directing secretion; that stretch reads MAPRTLLLVLSGALALTETWA. The alpha-1 stretch occupies residues 22–113; the sequence is GSHSLRYFST…LLLRYNQSEA (92 aa). Topologically, residues 22–307 are extracellular; that stretch reads GSHSLRYFST…ESSSQPTIPI (286 aa). Residue Asn-109 is glycosylated (N-linked (GlcNAc...) asparagine). Residues 114–205 are alpha-2; that stretch reads GSHTLQGMNG…ENGKETLQRA (92 aa). 2 disulfide bridges follow: Cys-124–Cys-187 and Cys-226–Cys-282. Positions 206-297 are alpha-3; that stretch reads DPPKAHVAHH…GLPQPLTLRW (92 aa). The region spanning 208–296 is the Ig-like C1-type domain; that stretch reads PKAHVAHHPI…EGLPQPLTLR (89 aa). Residues 298-307 form a connecting peptide region; sequence ESSSQPTIPI. A helical transmembrane segment spans residues 308 to 331; the sequence is VGIVAGLAVLAVVVTGAVVAAVMW. At 332–348 the chain is on the cytoplasmic side; the sequence is RRKSSDRNRGSYSQPTM.

Belongs to the MHC class I family. Heterodimer of an alpha chain and a beta chain (beta-2-microglobulin).

It localises to the membrane. Functionally, involved in the presentation of foreign antigens to the immune system. This chain is Mamu class I histocompatibility antigen, alpha chain F (Mamu-F), found in Macaca mulatta (Rhesus macaque).